We begin with the raw amino-acid sequence, 412 residues long: Proline-rich protein 30 (412 aa).

Positions 33–45 are enriched in polar residues; that stretch reads HNLQPLSAHQSLR. 3 disordered regions span residues 33 to 75, 123 to 174, and 318 to 412; these read HNLQ…QFGS, PLTP…SNRQ, and PKEV…KSSV. Low complexity-rich tracts occupy residues 126 to 142 and 334 to 350; these read PSFS…PHSP and PSPA…ADPA. The segment covering 353 to 372 has biased composition (polar residues); it reads TPSQTRSFRSAGLQSPNSPR.

This chain is Proline-rich protein 30 (PRR30), found in Macaca fascicularis (Crab-eating macaque).